A 430-amino-acid polypeptide reads, in one-letter code: C4-dicarboxylate transport protein (430 aa).

Transmembrane regions (helical) follow at residues 9 to 29 (VLYV…HFYP), 45 to 65 (LIKM…IAGM), 79 to 99 (LLYF…ATHL), 149 to 169 (GEIL…AHLG), 185 to 205 (VLFG…FGAM), 223 to 243 (LIGT…GAIA), 308 to 328 (IYMT…LTWM), and 356 to 376 (AATL…ILGI).

The protein belongs to the dicarboxylate/amino acid:cation symporter (DAACS) (TC 2.A.23) family.

It is found in the cell inner membrane. In terms of biological role, responsible for the transport of dicarboxylates such as succinate, fumarate, and malate from the periplasm across the membrane. The polypeptide is C4-dicarboxylate transport protein (Burkholderia orbicola (strain MC0-3)).